The primary structure comprises 166 residues: Small ribosomal subunit protein uS5 (166 aa).

Residues 12–75 enclose the S5 DRBM domain; that stretch reads YIEKLVQVNR…EAARRNMIQV (64 aa).

Belongs to the universal ribosomal protein uS5 family. Part of the 30S ribosomal subunit. Contacts proteins S4 and S8.

Its function is as follows. With S4 and S12 plays an important role in translational accuracy. Located at the back of the 30S subunit body where it stabilizes the conformation of the head with respect to the body. The chain is Small ribosomal subunit protein uS5 from Pseudomonas entomophila (strain L48).